The chain runs to 123 residues: MIKGIGTDIVEIERIKKAIESNPNFINRFFTEKEIEYFKLRKFNANTISGNFAAKEAVSKALGSGFRGFGLMDIEVLRDELGKPIVNLSDKLYKMFNLDNYNIFISISHSNTDAIAYAIIEVI.

Mg(2+) is bound by residues aspartate 8 and glutamate 56.

The protein belongs to the P-Pant transferase superfamily. AcpS family. The cofactor is Mg(2+).

The protein localises to the cytoplasm. It carries out the reaction apo-[ACP] + CoA = holo-[ACP] + adenosine 3',5'-bisphosphate + H(+). Functionally, transfers the 4'-phosphopantetheine moiety from coenzyme A to a Ser of acyl-carrier-protein. The polypeptide is Holo-[acyl-carrier-protein] synthase (Clostridium botulinum (strain Alaska E43 / Type E3)).